A 338-amino-acid chain; its full sequence is UDP-3-O-acylglucosamine N-acyltransferase (338 aa).

Residue histidine 251 is the Proton acceptor of the active site.

Belongs to the transferase hexapeptide repeat family. LpxD subfamily. Homotrimer.

The catalysed reaction is a UDP-3-O-[(3R)-3-hydroxyacyl]-alpha-D-glucosamine + a (3R)-hydroxyacyl-[ACP] = a UDP-2-N,3-O-bis[(3R)-3-hydroxyacyl]-alpha-D-glucosamine + holo-[ACP] + H(+). It functions in the pathway bacterial outer membrane biogenesis; LPS lipid A biosynthesis. Functionally, catalyzes the N-acylation of UDP-3-O-acylglucosamine using 3-hydroxyacyl-ACP as the acyl donor. Is involved in the biosynthesis of lipid A, a phosphorylated glycolipid that anchors the lipopolysaccharide to the outer membrane of the cell. The polypeptide is UDP-3-O-acylglucosamine N-acyltransferase (Psychrobacter cryohalolentis (strain ATCC BAA-1226 / DSM 17306 / VKM B-2378 / K5)).